The following is a 143-amino-acid chain: Class II hydrophobin qid3 (143 aa).

A signal peptide spans Met-1–Ala-17. Residues Asn-20 to Thr-37 show a composition bias toward pro residues. Residues Asn-20–Asn-67 are disordered. 10 tandem repeats follow at residues Asn-41–Gly-42, Asn-43–Gly-44, Asn-47–Gly-48, Asn-49–Gly-50, Asn-51–Gly-52, Asn-53–Gly-54, Asn-55–Gly-56, Asn-59–Gly-60, Asn-61–Gly-62, and Asn-63–Gly-64. The 10 X 2 AA repeats of N-G stretch occupies residues Asn-41 to Gly-64. A compositionally biased stretch (gly residues) spans Gly-42 to Asn-63. Disulfide bonds link Cys-74–Cys-124, Cys-85–Cys-97, and Cys-125–Cys-136.

This sequence belongs to the cerato-ulmin hydrophobin family. As to quaternary structure, homotetramer. Further self-assembles to form highly ordered films at water-air interfaces through intermolecular interactions.

It is found in the secreted. It localises to the cell wall. Functionally, aerial growth, conidiation, and dispersal of filamentous fungi in the environment rely upon a capability of their secreting small amphipathic proteins called hydrophobins (HPBs) with low sequence identity. Class I can self-assemble into an outermost layer of rodlet bundles on aerial cell surfaces, conferring cellular hydrophobicity that supports fungal growth, development and dispersal; whereas Class II form highly ordered films at water-air interfaces through intermolecular interactions but contribute nothing to the rodlet structure. Qid3 is a class II hydrophobin that might acts as a chitinase inhibitor at the cell surface that blocks the degradation of the chitin rings localized in the budding region of dividing cells. This Trichoderma harzianum (Hypocrea lixii) protein is Class II hydrophobin qid3.